We begin with the raw amino-acid sequence, 159 residues long: Phosphopantetheine adenylyltransferase (159 aa).

Residue Ser10 coordinates substrate. ATP contacts are provided by residues 10–11 (SF) and His18. Residues Lys42, Leu77, and Lys91 each contribute to the substrate site. ATP is bound by residues 92-94 (GIR), Glu102, and 126-132 (NAHVSSS).

This sequence belongs to the bacterial CoaD family. In terms of assembly, homohexamer. Requires Mg(2+) as cofactor.

The protein resides in the cytoplasm. The catalysed reaction is (R)-4'-phosphopantetheine + ATP + H(+) = 3'-dephospho-CoA + diphosphate. It functions in the pathway cofactor biosynthesis; coenzyme A biosynthesis; CoA from (R)-pantothenate: step 4/5. In terms of biological role, reversibly transfers an adenylyl group from ATP to 4'-phosphopantetheine, yielding dephospho-CoA (dPCoA) and pyrophosphate. The polypeptide is Phosphopantetheine adenylyltransferase (Leifsonia xyli subsp. xyli (strain CTCB07)).